The chain runs to 167 residues: Photosystem I assembly protein Ycf3 (167 aa).

TPR repeat units lie at residues 35–68, 72–105, and 120–153; these read AFSY…ETDA, SYIL…NPSL, and GEQA…APTN.

It belongs to the Ycf3 family.

It localises to the plastid. It is found in the chloroplast thylakoid membrane. Its function is as follows. Essential for the assembly of the photosystem I (PSI) complex. May act as a chaperone-like factor to guide the assembly of the PSI subunits. This is Photosystem I assembly protein Ycf3 from Chlorella vulgaris (Green alga).